The sequence spans 363 residues: Fructose-bisphosphate aldolase, muscle type (363 aa).

2 residues coordinate substrate: Arg56 and Lys147. Catalysis depends on Lys230, which acts as the Schiff-base intermediate with dihydroxyacetone-P.

It belongs to the class I fructose-bisphosphate aldolase family. Homotetramer. In terms of tissue distribution, expressed mainly in the skeletal muscle, heart muscle, brain, and some other tissues, but probably not in liver.

The catalysed reaction is beta-D-fructose 1,6-bisphosphate = D-glyceraldehyde 3-phosphate + dihydroxyacetone phosphate. The protein operates within carbohydrate degradation; glycolysis; D-glyceraldehyde 3-phosphate and glycerone phosphate from D-glucose: step 4/4. The sequence is that of Fructose-bisphosphate aldolase, muscle type from Lethenteron camtschaticum (Japanese lamprey).